Reading from the N-terminus, the 101-residue chain is Small ribosomal subunit protein uS14 (101 aa).

It belongs to the universal ribosomal protein uS14 family. In terms of assembly, part of the 30S ribosomal subunit. Contacts proteins S3 and S10.

Its function is as follows. Binds 16S rRNA, required for the assembly of 30S particles and may also be responsible for determining the conformation of the 16S rRNA at the A site. The protein is Small ribosomal subunit protein uS14 of Erythrobacter litoralis (strain HTCC2594).